A 155-amino-acid chain; its full sequence is UPF0461 protein C5orf24 homolog (155 aa).

Residues 60–69 (NETHLQTSTS) are compositionally biased toward polar residues. The disordered stretch occupies residues 60–155 (NETHLQTSTS…QQALMCSSDA (96 aa)). Residues 78–92 (LKKKKNVGRSGKRGR) show a composition bias toward basic residues. Residues 94 to 107 (SGTTKSAGYRTSTG) show a composition bias toward polar residues.

This sequence belongs to the UPF0461 family.

The sequence is that of UPF0461 protein C5orf24 homolog from Xenopus laevis (African clawed frog).